The following is a 387-amino-acid chain: Muscleblind-like protein 1 (387 aa).

Thr-6 is subject to Phosphothreonine. C3H1-type zinc fingers lie at residues 13 to 41 (WLTL…HPSK), 47 to 73 (NGRV…HPPP), 178 to 206 (TDRL…HPAD), and 214 to 240 (DNTV…HPPA).

The protein belongs to the muscleblind family. Interacts with DDX1 and YBX1. Interacts with HNRNPH1; the interaction in RNA-independent. Interacts with RBPMS; the interaction allows cooperative assembly of RNA-bound stable cell-specific alternative splicing regulatory complexes.

It is found in the nucleus. The protein resides in the cytoplasm. The protein localises to the cytoplasmic granule. Functionally, mediates pre-mRNA alternative splicing regulation. Acts either as activator or repressor of splicing on specific pre-mRNA targets. Inhibits cardiac troponin-T (TNNT2) pre-mRNA exon inclusion but induces insulin receptor (IR) pre-mRNA exon inclusion in muscle. Antagonizes the alternative splicing activity pattern of CELF proteins. Regulates the TNNT2 exon 5 skipping through competition with U2AF2. Inhibits the formation of the spliceosome A complex on intron 4 of TNNT2 pre-mRNA. Binds to the stem-loop structure within the polypyrimidine tract of TNNT2 intron 4 during spliceosome assembly. Binds to the 5'-YGCU(U/G)Y-3'consensus sequence. Binds to the IR RNA. Binds to expanded CUG repeat RNA, which folds into a hairpin structure containing GC base pairs and bulged, unpaired U residues. Together with RNA binding proteins RBPMS and RBFOX2, activates vascular smooth muscle cells alternative splicing events. Regulates NCOR2 alternative splicing. This is Muscleblind-like protein 1 from Rattus norvegicus (Rat).